A 201-amino-acid chain; its full sequence is ATP-dependent Clp protease proteolytic subunit (201 aa).

Residue S105 is the Nucleophile of the active site. H130 is an active-site residue.

Belongs to the peptidase S14 family. As to quaternary structure, fourteen ClpP subunits assemble into 2 heptameric rings which stack back to back to give a disk-like structure with a central cavity, resembling the structure of eukaryotic proteasomes.

It is found in the cytoplasm. The catalysed reaction is Hydrolysis of proteins to small peptides in the presence of ATP and magnesium. alpha-casein is the usual test substrate. In the absence of ATP, only oligopeptides shorter than five residues are hydrolyzed (such as succinyl-Leu-Tyr-|-NHMec, and Leu-Tyr-Leu-|-Tyr-Trp, in which cleavage of the -Tyr-|-Leu- and -Tyr-|-Trp bonds also occurs).. In terms of biological role, cleaves peptides in various proteins in a process that requires ATP hydrolysis. Has a chymotrypsin-like activity. Plays a major role in the degradation of misfolded proteins. The polypeptide is ATP-dependent Clp protease proteolytic subunit (Aquifex aeolicus (strain VF5)).